Reading from the N-terminus, the 481-residue chain is Glutamate--tRNA ligase (481 aa).

The short motif at 9–19 (PSPTGNLHIGT) is the 'HIGH' region element. Residues 247–251 (KLSKR) carry the 'KMSKS' region motif. K250 is a binding site for ATP.

It belongs to the class-I aminoacyl-tRNA synthetase family. Glutamate--tRNA ligase type 1 subfamily. As to quaternary structure, monomer.

The protein localises to the cytoplasm. The enzyme catalyses tRNA(Glu) + L-glutamate + ATP = L-glutamyl-tRNA(Glu) + AMP + diphosphate. Its function is as follows. Catalyzes the attachment of glutamate to tRNA(Glu) in a two-step reaction: glutamate is first activated by ATP to form Glu-AMP and then transferred to the acceptor end of tRNA(Glu). This chain is Glutamate--tRNA ligase, found in Trichormus variabilis (strain ATCC 29413 / PCC 7937) (Anabaena variabilis).